We begin with the raw amino-acid sequence, 97 residues long: Large ribosomal subunit protein bL31B (97 aa).

This sequence belongs to the bacterial ribosomal protein bL31 family. Type B subfamily. Part of the 50S ribosomal subunit.

This Mycolicibacterium paratuberculosis (strain ATCC BAA-968 / K-10) (Mycobacterium paratuberculosis) protein is Large ribosomal subunit protein bL31B (rpmE2).